The chain runs to 78 residues: Acyl carrier protein (78 aa).

The Carrier domain occupies 2–77; it reads SDTADRVKKI…DAIKYIDENK (76 aa). S37 bears the O-(pantetheine 4'-phosphoryl)serine mark.

This sequence belongs to the acyl carrier protein (ACP) family. In terms of processing, 4'-phosphopantetheine is transferred from CoA to a specific serine of apo-ACP by AcpS. This modification is essential for activity because fatty acids are bound in thioester linkage to the sulfhydryl of the prosthetic group.

The protein localises to the cytoplasm. It functions in the pathway lipid metabolism; fatty acid biosynthesis. Its function is as follows. Carrier of the growing fatty acid chain in fatty acid biosynthesis. This chain is Acyl carrier protein, found in Novosphingobium aromaticivorans (strain ATCC 700278 / DSM 12444 / CCUG 56034 / CIP 105152 / NBRC 16084 / F199).